The sequence spans 274 residues: Thiamine kinase (274 aa).

Belongs to the thiamine kinase family.

It catalyses the reaction thiamine + ATP = thiamine phosphate + ADP + H(+). It functions in the pathway cofactor biosynthesis; thiamine diphosphate biosynthesis; thiamine phosphate from thiamine: step 1/1. Functionally, catalyzes the ATP-dependent phosphorylation of thiamine to thiamine phosphate. Is involved in thiamine salvage. The polypeptide is Thiamine kinase (Salmonella gallinarum (strain 287/91 / NCTC 13346)).